We begin with the raw amino-acid sequence, 318 residues long: Thymidylate synthase (318 aa).

DUMP is bound by residues R25 and 180–181 (RR). C200 acts as the Nucleophile in catalysis. DUMP contacts are provided by residues 220–223 (RSGD), N231, and 261–263 (HIY). D223 contacts (6R)-5,10-methylene-5,6,7,8-tetrahydrofolate. Position 317 (A317) interacts with (6R)-5,10-methylene-5,6,7,8-tetrahydrofolate.

It belongs to the thymidylate synthase family. Bacterial-type ThyA subfamily. Homodimer.

The protein localises to the cytoplasm. The catalysed reaction is dUMP + (6R)-5,10-methylene-5,6,7,8-tetrahydrofolate = 7,8-dihydrofolate + dTMP. It participates in pyrimidine metabolism; dTTP biosynthesis. In terms of biological role, catalyzes the reductive methylation of 2'-deoxyuridine-5'-monophosphate (dUMP) to 2'-deoxythymidine-5'-monophosphate (dTMP) while utilizing 5,10-methylenetetrahydrofolate (mTHF) as the methyl donor and reductant in the reaction, yielding dihydrofolate (DHF) as a by-product. This enzymatic reaction provides an intracellular de novo source of dTMP, an essential precursor for DNA biosynthesis. The sequence is that of Thymidylate synthase from Lactobacillus johnsonii (strain CNCM I-12250 / La1 / NCC 533).